Consider the following 302-residue polypeptide: uncharacterized protein (302 aa).

Belongs to the HAD-like hydrolase superfamily.

This is an uncharacterized protein from Saccharomyces cerevisiae (strain ATCC 204508 / S288c) (Baker's yeast).